The sequence spans 109 residues: Large ribosomal subunit protein uL24 (109 aa).

This sequence belongs to the universal ribosomal protein uL24 family. In terms of assembly, part of the 50S ribosomal subunit.

One of two assembly initiator proteins, it binds directly to the 5'-end of the 23S rRNA, where it nucleates assembly of the 50S subunit. Functionally, one of the proteins that surrounds the polypeptide exit tunnel on the outside of the subunit. In Rickettsia rickettsii (strain Iowa), this protein is Large ribosomal subunit protein uL24.